Consider the following 274-residue polypeptide: Penicillin-insensitive murein endopeptidase (274 aa).

Residues 1–19 (MKKTAIALLAWFVSSASLA) form the signal peptide. Disulfide bonds link Cys-44–Cys-265, Cys-187–Cys-235, and Cys-216–Cys-223. Zn(2+)-binding residues include His-110, His-113, Asp-120, Asp-147, and His-150. A disordered region spans residues 225-274 (DQPLPPPGDGCGAELQSWFEPPKPGTTKPEKKTPPPLPPSCQALLDEHVL).

The protein belongs to the peptidase M74 family. Dimer. Zn(2+) is required as a cofactor.

Its subcellular location is the periplasm. Murein endopeptidase that cleaves the D-alanyl-meso-2,6-diamino-pimelyl amide bond that connects peptidoglycan strands. Likely plays a role in the removal of murein from the sacculus. The protein is Penicillin-insensitive murein endopeptidase of Salmonella paratyphi A (strain ATCC 9150 / SARB42).